The sequence spans 607 residues: Phosphogluconate dehydratase (607 aa).

C156 and C223 together coordinate [4Fe-4S] cluster.

Belongs to the IlvD/Edd family. [4Fe-4S] cluster is required as a cofactor.

The enzyme catalyses 6-phospho-D-gluconate = 2-dehydro-3-deoxy-6-phospho-D-gluconate + H2O. It functions in the pathway carbohydrate metabolism; Entner-Doudoroff pathway. Functionally, catalyzes the dehydration of 6-phospho-D-gluconate to 2-dehydro-3-deoxy-6-phospho-D-gluconate. The chain is Phosphogluconate dehydratase from Zymomonas mobilis subsp. mobilis (strain ATCC 31821 / ZM4 / CP4).